The primary structure comprises 446 residues: Alkylglycerol monooxygenase (446 aa).

2 consecutive transmembrane segments (helical) span residues 43–63 (ATVY…AWKG) and 110–130 (WDSP…YYWF). The Fatty acid hydroxylase domain maps to 118–248 (LTFLGVDFGY…LIIWDRMFGT (131 aa)). Positions 131–135 (HRMAH) match the Histidine box-1 motif. The Histidine box-2 signature appears at 144-148 (HQTHH). The chain crosses the membrane as a helical span at residues 167–187 (YFSWMFYWPMAFCIPPSVFAV). The short motif at 220–224 (HRVHH) is the Histidine box-3 element. A run of 3 helical transmembrane segments spans residues 339 to 359 (MMHF…KLIL), 362 to 382 (ATLL…GFIF), and 412 to 434 (VPYL…GLKA).

It belongs to the sterol desaturase family. TMEM195 subfamily. Fe cation is required as a cofactor.

It is found in the endoplasmic reticulum membrane. It carries out the reaction 1-O-(1,2-saturated-alkyl)-sn-glycerol + (6R)-L-erythro-5,6,7,8-tetrahydrobiopterin + O2 = a 1-(1-hydroxyalkyl)-sn-glycerol + (6R)-L-erythro-6,7-dihydrobiopterin + H2O. In terms of biological role, glyceryl-ether monooxygenase that cleaves the O-alkyl bond of ether lipids. Ether lipids are essential components of brain membranes. This is Alkylglycerol monooxygenase (agmo) from Xenopus tropicalis (Western clawed frog).